Reading from the N-terminus, the 376-residue chain is Mitogen-activated protein kinase 5 (376 aa).

The Protein kinase domain maps to 43–329 (VPPIRPIGRG…VEEALCYPYL (287 aa)). ATP-binding positions include 49–57 (IGRGAYGFV) and lysine 72. Aspartate 169 functions as the Proton acceptor in the catalytic mechanism. The residue at position 201 (threonine 201) is a Phosphothreonine. The short motif at 201–203 (TEY) is the TXY element. Position 203 is a phosphotyrosine (tyrosine 203). The residue at position 206 (threonine 206) is a Phosphothreonine.

Belongs to the protein kinase superfamily. CMGC Ser/Thr protein kinase family. MAP kinase subfamily. Post-translationally, autophosphorylated on threonine and tyrosine residues. In terms of processing, dually phosphorylated on Thr-201 and Tyr-203, which activates the enzyme.

The catalysed reaction is L-seryl-[protein] + ATP = O-phospho-L-seryl-[protein] + ADP + H(+). It carries out the reaction L-threonyl-[protein] + ATP = O-phospho-L-threonyl-[protein] + ADP + H(+). With respect to regulation, activated by threonine and tyrosine phosphorylation. Activated by the MAP kinase kinase MKK2. Activated by the MAP kinase kinase MKK6 in vitro. The polypeptide is Mitogen-activated protein kinase 5 (MPK5) (Arabidopsis thaliana (Mouse-ear cress)).